The sequence spans 419 residues: Tyrosine--tRNA ligase (419 aa).

Tyrosine 34 is a binding site for L-tyrosine. Residues 39-48 (PSGDSMHIGH) carry the 'HIGH' region motif. Tyrosine 168 and glutamine 172 together coordinate L-tyrosine. A 'KMSKS' region motif is present at residues 230–234 (KFGKS). Lysine 233 provides a ligand contact to ATP. Residues 352-418 (VNLVDWLVSL…GKKKYFLVSY (67 aa)) form the S4 RNA-binding domain.

It belongs to the class-I aminoacyl-tRNA synthetase family. TyrS type 1 subfamily. Homodimer.

Its subcellular location is the cytoplasm. The catalysed reaction is tRNA(Tyr) + L-tyrosine + ATP = L-tyrosyl-tRNA(Tyr) + AMP + diphosphate + H(+). Functionally, catalyzes the attachment of tyrosine to tRNA(Tyr) in a two-step reaction: tyrosine is first activated by ATP to form Tyr-AMP and then transferred to the acceptor end of tRNA(Tyr). This chain is Tyrosine--tRNA ligase, found in Listeria welshimeri serovar 6b (strain ATCC 35897 / DSM 20650 / CCUG 15529 / CIP 8149 / NCTC 11857 / SLCC 5334 / V8).